The sequence spans 353 residues: Phosphate acyltransferase (353 aa).

This sequence belongs to the PlsX family. As to quaternary structure, homodimer. Probably interacts with PlsY.

Its subcellular location is the cytoplasm. It carries out the reaction a fatty acyl-[ACP] + phosphate = an acyl phosphate + holo-[ACP]. Its pathway is lipid metabolism; phospholipid metabolism. Functionally, catalyzes the reversible formation of acyl-phosphate (acyl-PO(4)) from acyl-[acyl-carrier-protein] (acyl-ACP). This enzyme utilizes acyl-ACP as fatty acyl donor, but not acyl-CoA. The protein is Phosphate acyltransferase of Bradyrhizobium diazoefficiens (strain JCM 10833 / BCRC 13528 / IAM 13628 / NBRC 14792 / USDA 110).